The primary structure comprises 302 residues: Protease HtpX homolog (302 aa).

Residues 27–47 (LLMAIGGIIGGTAGMLIALII) traverse the membrane as a helical segment. Histidine 141 contributes to the Zn(2+) binding site. Residue glutamate 142 is part of the active site. Histidine 145 is a binding site for Zn(2+). The next 2 helical transmembrane spans lie at 151 to 171 (VLVA…ANMA) and 195 to 215 (IGAI…QLAI). Zn(2+) is bound at residue glutamate 220.

The protein belongs to the peptidase M48B family. The cofactor is Zn(2+).

Its subcellular location is the cell inner membrane. The chain is Protease HtpX homolog from Aquifex aeolicus (strain VF5).